Here is a 91-residue protein sequence, read N- to C-terminus: Potassium channel toxin TdiKIK (91 aa).

The first 25 residues, 1 to 25, serve as a signal peptide directing secretion; that stretch reads MVATNRCCVFALLVALLLIHSLAEA. The propeptide occupies 26-44; sequence GKGKEVLGKIKNKLVEVKE. One can recognise a BetaSPN-type CS-alpha/beta domain in the interval 58-91; sequence EYACPVIDKFCEDHCAAKNAIGKCDDFKCQCLNS. Cystine bridges form between Cys-61–Cys-81, Cys-68–Cys-86, and Cys-72–Cys-88.

Expressed by the venom gland.

The protein resides in the secreted. Functionally, the full peptide presents antibacterial and cytotoxic activities. The synthetic C-terminus (AA 33-76) inhibits voltage-gated potassium channels Kv1.1/KCNA1, Kv1.2/KCNA2, and Kv1.3/KCNA3. In Tityus discrepans (Venezuelan scorpion), this protein is Potassium channel toxin TdiKIK.